The sequence spans 451 residues: Chromosomal replication initiator protein DnaA (451 aa).

Residues 1–82 (MENSLWKQCL…RLELQIGSSA (82 aa)) are domain I, interacts with DnaA modulators. The segment at 82–114 (AVVAPPRRRQVSVTTPSPSAAADQTPATRSAAS) is domain II. The tract at residues 85-112 (APPRRRQVSVTTPSPSAAADQTPATRSA) is disordered. The interval 115–331 (NLNSNFTFDT…GALRRVVANA (217 aa)) is domain III, AAA+ region. 4 residues coordinate ATP: Gly159, Gly161, Lys162, and Thr163. Residues 332–451 (QFTGQEITVE…YSNLLRTLST (120 aa)) form a domain IV, binds dsDNA region.

Belongs to the DnaA family. In terms of assembly, oligomerizes as a right-handed, spiral filament on DNA at oriC.

It is found in the cytoplasm. Functionally, plays an essential role in the initiation and regulation of chromosomal replication. ATP-DnaA binds to the origin of replication (oriC) to initiate formation of the DNA replication initiation complex once per cell cycle. Binds the DnaA box (a 9 base pair repeat at the origin) and separates the double-stranded (ds)DNA. Forms a right-handed helical filament on oriC DNA; dsDNA binds to the exterior of the filament while single-stranded (ss)DNA is stabiized in the filament's interior. The ATP-DnaA-oriC complex binds and stabilizes one strand of the AT-rich DNA unwinding element (DUE), permitting loading of DNA polymerase. After initiation quickly degrades to an ADP-DnaA complex that is not apt for DNA replication. Binds acidic phospholipids. This is Chromosomal replication initiator protein DnaA from Alkalilimnicola ehrlichii (strain ATCC BAA-1101 / DSM 17681 / MLHE-1).